We begin with the raw amino-acid sequence, 156 residues long: Small ribosomal subunit protein uS7 (156 aa).

The protein belongs to the universal ribosomal protein uS7 family. Part of the 30S ribosomal subunit. Contacts proteins S9 and S11.

In terms of biological role, one of the primary rRNA binding proteins, it binds directly to 16S rRNA where it nucleates assembly of the head domain of the 30S subunit. Is located at the subunit interface close to the decoding center, probably blocks exit of the E-site tRNA. This is Small ribosomal subunit protein uS7 from Arthrobacter sp. (strain FB24).